The following is a 429-amino-acid chain: Enolase (429 aa).

Gln-163 serves as a coordination point for (2R)-2-phosphoglycerate. The Proton donor role is filled by Glu-205. Residues Asp-242, Glu-285, and Asp-312 each contribute to the Mg(2+) site. (2R)-2-phosphoglycerate is bound by residues Lys-337, Arg-366, Ser-367, and Lys-388. Lys-337 serves as the catalytic Proton acceptor.

This sequence belongs to the enolase family. It depends on Mg(2+) as a cofactor.

The protein localises to the cytoplasm. Its subcellular location is the secreted. The protein resides in the cell surface. It catalyses the reaction (2R)-2-phosphoglycerate = phosphoenolpyruvate + H2O. It participates in carbohydrate degradation; glycolysis; pyruvate from D-glyceraldehyde 3-phosphate: step 4/5. Functionally, catalyzes the reversible conversion of 2-phosphoglycerate (2-PG) into phosphoenolpyruvate (PEP). It is essential for the degradation of carbohydrates via glycolysis. This Methylorubrum extorquens (strain PA1) (Methylobacterium extorquens) protein is Enolase.